The sequence spans 949 residues: Protocadherin alpha-11 (949 aa).

Residues 1–29 (MFGFQRRGLGTPRLQLWLLLLEFWEVGSG) form the signal peptide. Cadherin domains lie at 30–133 (QLHY…PPVF), 157–242 (ASDA…DPEF), 243–349 (DKSE…SPEV), 350–454 (AVTS…APAF), 455–564 (AQPE…APAL), and 580–677 (VPRS…APKA). Residues 30–696 (QLHYSVSEEA…SPEAALVDVN (667 aa)) lie on the Extracellular side of the membrane. N-linked (GlcNAc...) asparagine glycosylation is found at asparagine 265 and asparagine 304. An N-linked (GlcNAc...) asparagine glycan is attached at asparagine 547. Residues 697–717 (VYLIIAICVVSSLLVLTLLLY) form a helical membrane-spanning segment. Residues 718–949 (TALWWSATPT…GNSTTDNSDQ (232 aa)) lie on the Cytoplasmic side of the membrane. PXXP repeat units follow at residues 733 to 736 (PGKP) and 773 to 776 (PSLP). Positions 733-893 (PGKPTLVCSR…PDKFIIPGSP (161 aa)) are 6 X 4 AA repeats of P-X-X-P. 2 disordered regions span residues 753 to 807 (RRQR…DWRY) and 826 to 949 (ILRA…NSDQ). Residues 780-789 (NKEEEGERQE) are compositionally biased toward basic and acidic residues. 4 PXXP repeats span residues 795-798 (PGQP), 831-834 (PGGP), 872-875 (PGNP), and 890-893 (PGSP). Over residues 908-922 (DKSDFITFGKKEETK) the composition is skewed to basic and acidic residues.

Its subcellular location is the cell membrane. Functionally, potential calcium-dependent cell-adhesion protein. May be involved in the establishment and maintenance of specific neuronal connections in the brain. The sequence is that of Protocadherin alpha-11 (PCDHA11) from Homo sapiens (Human).